The chain runs to 319 residues: Aliphatic sulfonates import ATP-binding protein SsuB (319 aa).

The 220-residue stretch at 63–282 (VTLSGVSKRF…ARASAAFAAL (220 aa)) folds into the ABC transporter domain. 95–102 (GRSGCGKS) serves as a coordination point for ATP.

This sequence belongs to the ABC transporter superfamily. Aliphatic sulfonates importer (TC 3.A.1.17.2) family. The complex is composed of two ATP-binding proteins (SsuB), two transmembrane proteins (SsuC) and a solute-binding protein (SsuA).

Its subcellular location is the cell inner membrane. The enzyme catalyses ATP + H2O + aliphatic sulfonate-[sulfonate-binding protein]Side 1 = ADP + phosphate + aliphatic sulfonateSide 2 + [sulfonate-binding protein]Side 1.. Part of the ABC transporter complex SsuABC involved in aliphatic sulfonates import. Responsible for energy coupling to the transport system. The protein is Aliphatic sulfonates import ATP-binding protein SsuB of Burkholderia ambifaria (strain ATCC BAA-244 / DSM 16087 / CCUG 44356 / LMG 19182 / AMMD) (Burkholderia cepacia (strain AMMD)).